A 739-amino-acid chain; its full sequence is Phosphoribosylformylglycinamidine synthase subunit PurL (739 aa).

The active site involves His-53. ATP is bound by residues Tyr-56 and Lys-95. Glu-97 is a binding site for Mg(2+). Substrate is bound by residues 98–101 (SHNH) and Arg-120. The Proton acceptor role is filled by His-99. Residue Asp-121 participates in Mg(2+) binding. Gln-244 contributes to the substrate binding site. Asp-274 lines the Mg(2+) pocket. 318–320 (ESQ) serves as a coordination point for substrate. The ATP site is built by Asp-501 and Gly-538. Asn-539 contacts Mg(2+). Ser-541 lines the substrate pocket.

Belongs to the FGAMS family. As to quaternary structure, monomer. Part of the FGAM synthase complex composed of 1 PurL, 1 PurQ and 2 PurS subunits.

Its subcellular location is the cytoplasm. The enzyme catalyses N(2)-formyl-N(1)-(5-phospho-beta-D-ribosyl)glycinamide + L-glutamine + ATP + H2O = 2-formamido-N(1)-(5-O-phospho-beta-D-ribosyl)acetamidine + L-glutamate + ADP + phosphate + H(+). It participates in purine metabolism; IMP biosynthesis via de novo pathway; 5-amino-1-(5-phospho-D-ribosyl)imidazole from N(2)-formyl-N(1)-(5-phospho-D-ribosyl)glycinamide: step 1/2. Functionally, part of the phosphoribosylformylglycinamidine synthase complex involved in the purines biosynthetic pathway. Catalyzes the ATP-dependent conversion of formylglycinamide ribonucleotide (FGAR) and glutamine to yield formylglycinamidine ribonucleotide (FGAM) and glutamate. The FGAM synthase complex is composed of three subunits. PurQ produces an ammonia molecule by converting glutamine to glutamate. PurL transfers the ammonia molecule to FGAR to form FGAM in an ATP-dependent manner. PurS interacts with PurQ and PurL and is thought to assist in the transfer of the ammonia molecule from PurQ to PurL. This Listeria monocytogenes serovar 1/2a (strain ATCC BAA-679 / EGD-e) protein is Phosphoribosylformylglycinamidine synthase subunit PurL.